A 270-amino-acid polypeptide reads, in one-letter code: L-aspartate dehydrogenase (270 aa).

Positions 123 and 191 each coordinate NAD(+). Histidine 221 is an active-site residue.

This sequence belongs to the L-aspartate dehydrogenase family.

The catalysed reaction is L-aspartate + NADP(+) + H2O = oxaloacetate + NH4(+) + NADPH + H(+). It catalyses the reaction L-aspartate + NAD(+) + H2O = oxaloacetate + NH4(+) + NADH + H(+). Its pathway is cofactor biosynthesis; NAD(+) biosynthesis; iminoaspartate from L-aspartate (dehydrogenase route): step 1/1. Functionally, specifically catalyzes the NAD or NADP-dependent dehydrogenation of L-aspartate to iminoaspartate. This Methanocella arvoryzae (strain DSM 22066 / NBRC 105507 / MRE50) protein is L-aspartate dehydrogenase.